A 72-amino-acid chain; its full sequence is Large ribosomal subunit protein bL31 (72 aa).

The protein belongs to the bacterial ribosomal protein bL31 family. Type A subfamily. In terms of assembly, part of the 50S ribosomal subunit.

In terms of biological role, binds the 23S rRNA. The sequence is that of Large ribosomal subunit protein bL31 from Prosthecochloris aestuarii (strain DSM 271 / SK 413).